A 344-amino-acid chain; its full sequence is Anthranilate phosphoribosyltransferase (344 aa).

Residues glycine 80, 83-84, threonine 88, 90-93, 108-116, and serine 120 each bind 5-phospho-alpha-D-ribose 1-diphosphate; these read GD, NVST, and KHGNRSVSS. Glycine 80 contacts anthranilate. Serine 92 contacts Mg(2+). Position 111 (asparagine 111) interacts with anthranilate. Arginine 166 serves as a coordination point for anthranilate. Positions 225 and 226 each coordinate Mg(2+).

Belongs to the anthranilate phosphoribosyltransferase family. Homodimer. The cofactor is Mg(2+).

It catalyses the reaction N-(5-phospho-beta-D-ribosyl)anthranilate + diphosphate = 5-phospho-alpha-D-ribose 1-diphosphate + anthranilate. Its pathway is amino-acid biosynthesis; L-tryptophan biosynthesis; L-tryptophan from chorismate: step 2/5. Catalyzes the transfer of the phosphoribosyl group of 5-phosphorylribose-1-pyrophosphate (PRPP) to anthranilate to yield N-(5'-phosphoribosyl)-anthranilate (PRA). This is Anthranilate phosphoribosyltransferase from Legionella pneumophila (strain Lens).